A 476-amino-acid polypeptide reads, in one-letter code: Aspartyl/glutamyl-tRNA(Asn/Gln) amidotransferase subunit B (476 aa).

This sequence belongs to the GatB/GatE family. GatB subfamily. As to quaternary structure, heterotrimer of A, B and C subunits.

It catalyses the reaction L-glutamyl-tRNA(Gln) + L-glutamine + ATP + H2O = L-glutaminyl-tRNA(Gln) + L-glutamate + ADP + phosphate + H(+). It carries out the reaction L-aspartyl-tRNA(Asn) + L-glutamine + ATP + H2O = L-asparaginyl-tRNA(Asn) + L-glutamate + ADP + phosphate + 2 H(+). In terms of biological role, allows the formation of correctly charged Asn-tRNA(Asn) or Gln-tRNA(Gln) through the transamidation of misacylated Asp-tRNA(Asn) or Glu-tRNA(Gln) in organisms which lack either or both of asparaginyl-tRNA or glutaminyl-tRNA synthetases. The reaction takes place in the presence of glutamine and ATP through an activated phospho-Asp-tRNA(Asn) or phospho-Glu-tRNA(Gln). This chain is Aspartyl/glutamyl-tRNA(Asn/Gln) amidotransferase subunit B, found in Geobacillus thermodenitrificans (strain NG80-2).